Reading from the N-terminus, the 160-residue chain is Eukaryotic translation initiation factor 5A (160 aa).

A compositionally biased stretch (basic and acidic residues) spans 1 to 10 (MSDDDHHFES). The interval 1–23 (MSDDDHHFESSADAGASKTYPQQ) is disordered. Lys52 is subject to Hypusine.

Belongs to the eIF-5A family. In terms of processing, lys-52 undergoes hypusination, a unique post-translational modification that consists in the addition of a butylamino group from spermidine to lysine side chain, leading to the formation of the unusual amino acid hypusine. eIF-5As are the only known proteins to undergo this modification, which is essential for their function.

Translation factor that promotes translation elongation and termination, particularly upon ribosome stalling at specific amino acid sequence contexts. Binds between the exit (E) and peptidyl (P) site of the ribosome and promotes rescue of stalled ribosome: specifically required for efficient translation of polyproline-containing peptides as well as other motifs that stall the ribosome. Acts as a ribosome quality control (RQC) cofactor by joining the RQC complex to facilitate peptidyl transfer during CAT tailing step. This is Eukaryotic translation initiation factor 5A from Dianthus caryophyllus (Carnation).